The following is a 222-amino-acid chain: Bone marrow proteoglycan (222 aa).

The first 16 residues, 1–16, serve as a signal peptide directing secretion; it reads MKLPLLLALLFGAVSA. Residues 17 to 105 constitute a propeptide, acidic; the sequence is LHLRSETSTF…VKVVGIPGCQ (89 aa). O-linked (GalNAc...) threonine; partial glycosylation occurs at threonine 23. A glycan (O-linked (GalNAc...) serine) is linked at serine 24. A glycan (O-linked (GalNAc...) threonine) is linked at threonine 25. The segment at 25 to 75 is disordered; sequence TFETPLGAKTLPEDEETPEQEMEETPCRELEEEEEWGSGSEDASKKDGAVE. O-linked (GalNAc...) threonine; partial glycosylation is present at threonine 34. A compositionally biased stretch (acidic residues) spans 37-60; sequence EDEETPEQEMEETPCRELEEEEEW. Serine 62 carries an O-linked (Xyl...) (chondroitin sulfate) serine glycan. N-linked (GlcNAc...) asparagine glycosylation is present at asparagine 86. One can recognise a C-type lectin domain in the interval 104-222; that stretch reads CQTCRYLLVR…LRRLPFICSY (119 aa). Disulfide bonds link cysteine 125–cysteine 220 and cysteine 197–cysteine 212.

In terms of assembly, in pregnancy serum, the proform exists as a disulfide-linked 2:2 heterotetramer with PAPPA, as a disulfide-linked 2:2 heterotetramer with AGT, and as a complex (probably a 2:2:2 heterohexamer) with AGT and C3dg. In terms of processing, nitrated. In terms of tissue distribution, detected in plasma and urine (at protein level). Detected in placenta (at protein level). High levels of the proform in placenta and pregnancy serum; in placenta, localized to X cells of septa and anchoring villi. Lower levels in a variety of other tissues including kidney, myometrium, endometrium, ovaries, breast, prostate, bone marrow and colon.

The protein resides in the secreted. It is found in the cytoplasmic vesicle. The protein localises to the secretory vesicle. Functionally, cytotoxin and helminthotoxin. Also induces non-cytolytic histamine release from human basophils. Involved in antiparasitic defense mechanisms and immune hypersensitivity reactions. The proform acts as a proteinase inhibitor, reducing the activity of PAPPA. The chain is Bone marrow proteoglycan (PRG2) from Homo sapiens (Human).